Consider the following 1002-residue polypeptide: Protein SMAX1-LIKE 7 (1002 aa).

The Clp R domain maps to 8–185 (ARQCLTEETA…DVLHPPVTSQ (178 aa)). 2 repeat regions span residues 12–86 (LTEE…LDRL) and 103–185 (VSNS…VTSQ). An EAR motif is present at residues 854–858 (LDLNL).

Belongs to the ClpA/ClpB family. As to quaternary structure, interacts with TPL/TPR in an EAR-motif dependent manner. Interacts with TPL, TPR1, TPR2 and TPR4. Interacts with MAX2 and TPR2. Interacts with D14. The interaction with D14 occurs in the presence of (2'R) stereoisomers of strigolactones, but not (2'S) stereoisomers. Ubiquitinated upon strigolactone treatment. Strigolactone, but not karrikin, triggers rapid SCF(MAX2)-dependent degradation. As to expression, expressed in axillary branches and roots. Detected in seedlings and leaves. Expressed in the primary rosette buds and expanding leaves of adult rosettes, the vasculature of the hypocotyls, cotyledons, and mature roots, and in the midvein and petioles of young leaves.

Its subcellular location is the nucleus. In terms of biological role, probable component of a transcriptional corepressor complex involved in branching control. Regulates cotyledon expansion and lateral root growth, but not germination or hypocotyl elongation. Promotes auxin transport and PIN1 accumulation in the stem and represses BRC1/TCP18 expression in axillary buds. This is Protein SMAX1-LIKE 7 from Arabidopsis thaliana (Mouse-ear cress).